Reading from the N-terminus, the 218-residue chain is Kappa-scoloptoxin(11)-Ssd1b (218 aa).

A signal peptide spans 1–16 (MFYSHLLFFTFTFACS). A propeptide spanning residues 17–25 (SSLNRKTKR) is cleaved from the precursor.

Contains 8 disulfide bonds. As to expression, expressed by the venom gland.

It is found in the secreted. Voltage-gated potassium channel inhibitor. The protein is Kappa-scoloptoxin(11)-Ssd1b of Scolopendra dehaani (Thai centipede).